A 598-amino-acid chain; its full sequence is NADH-ubiquinone oxidoreductase chain 5 (598 aa).

Helical transmembrane passes span 1 to 21, 28 to 48, 81 to 101, 115 to 135, 171 to 191, 193 to 213, 233 to 253, 265 to 285, 293 to 312, 323 to 343, 362 to 382, 399 to 421, 454 to 474, 480 to 500, 509 to 529, and 576 to 596; these read MLELWGVLSLTSLGVMVIFLF, FAESVKYAGYMNAVLLSILLM, CFFVVGLYVTWNILMFSFYYM, GLFLIAMLLLVSAESLFQLLI, GDIGLLIMLMWSLVTLGDWSF, GLYALDFVNTFFLLGVVLAAA, TPVSSLLHSSTMVVAGVFLLI, IQLMVFFLGTMTTLFSAICAL, VVAFSTASQLGLMVTAVGAG, MHAFFKAMLFMCSGSFIHGLQ, SVCFFIGSAALMGVPFLAGFF, WAVGLVLIATSFTAAYSVRLLYF, VIAGVVFIYFLSPNQISCLSL, LAAVFVTLVGGLIAWDVVNLL, IPELAFEAQVGFYPLIMHKLI, and LIKMYIAVMVMMGGLILGIMI.

The protein belongs to the complex I subunit 5 family.

It is found in the mitochondrion inner membrane. The catalysed reaction is a ubiquinone + NADH + 5 H(+)(in) = a ubiquinol + NAD(+) + 4 H(+)(out). Core subunit of the mitochondrial membrane respiratory chain NADH dehydrogenase (Complex I) that is believed to belong to the minimal assembly required for catalysis. Complex I functions in the transfer of electrons from NADH to the respiratory chain. The immediate electron acceptor for the enzyme is believed to be ubiquinone. This chain is NADH-ubiquinone oxidoreductase chain 5 (ND5), found in Branchiostoma lanceolatum (Common lancelet).